Consider the following 512-residue polypeptide: ETS translocation variant 3 (512 aa).

Residues 35-116 (IQLWHFILEL…KGKRFTYKFN (82 aa)) constitute a DNA-binding region (ETS). Positions 138–196 (QSAPPVPTASSRFHFPPLDTHSPTSDVQPGRFSASSLTASGQESSNGTDRKAELSXLED) are disordered. 3 positions are modified to phosphoserine: S139, S159, and S315. The segment covering 158–184 (HSPTSDVQPGRFSASSLTASGQESSNG) has biased composition (polar residues). Residues 341 to 512 (QFSIKLQPPP…QGLATAAADA (172 aa)) are disordered. Over residues 380–406 (IKVEPASEKDAESLRQSAREKEEHTXE) the composition is skewed to basic and acidic residues. A Glycyl lysine isopeptide (Lys-Gly) (interchain with G-Cter in SUMO2) cross-link involves residue K381. K388 carries the N6-acetyllysine; alternate modification. Residue K388 forms a Glycyl lysine isopeptide (Lys-Gly) (interchain with G-Cter in SUMO2); alternate linkage. Residues 443–452 (EPLEVTEDIE) show a composition bias toward acidic residues. Basic and acidic residues-rich tracts occupy residues 453–468 (DRPG…KEDA) and 479–491 (RWND…ELSK).

This sequence belongs to the ETS family.

The protein localises to the nucleus. Transcriptional repressor that contribute to growth arrest during terminal macrophage differentiation by repressing target genes involved in Ras-dependent proliferation. Represses MMP1 promoter activity. The polypeptide is ETS translocation variant 3 (ETV3) (Ateles geoffroyi (Black-handed spider monkey)).